We begin with the raw amino-acid sequence, 290 residues long: 33 kDa chaperonin (290 aa).

2 disulfides stabilise this stretch: C235-C237 and C268-C271.

Belongs to the HSP33 family. In terms of processing, under oxidizing conditions two disulfide bonds are formed involving the reactive cysteines. Under reducing conditions zinc is bound to the reactive cysteines and the protein is inactive.

Its subcellular location is the cytoplasm. Its function is as follows. Redox regulated molecular chaperone. Protects both thermally unfolding and oxidatively damaged proteins from irreversible aggregation. Plays an important role in the bacterial defense system toward oxidative stress. The polypeptide is 33 kDa chaperonin (Streptococcus equi subsp. zooepidemicus (strain H70)).